The sequence spans 870 residues: Dynamin-2 (870 aa).

One can recognise a Dynamin-type G domain in the interval 28–294 (HLDLPQIAVV…LTNHIRESLP (267 aa)). Residues 38 to 45 (GGQSAGKS) are G1 motif. GDP-binding residues include S41, G43, K44, S45, S46, R59, and G60. Positions 64-66 (VTR) are G2 motif. Positions 136–139 (DLPG) are G3 motif. Residues 205 to 208 (TKLD) form a G4 motif region. Residues K206, D208, and D211 each contribute to the GDP site. Residue Y231 is modified to Phosphotyrosine; by SRC. The segment at 235–238 (VNRS) is G5 motif. The GDP site is built by N236, R237, and Q239. K299 carries the N6-acetyllysine modification. In terms of domain architecture, PH spans 519-625 (LVIRRGWLTI…WKASFLRAGV (107 aa)). Y597 bears the Phosphotyrosine; by SRC mark. N6-acetyllysine is present on K598. Residues 653 to 744 (VETIRNLVDS…IIGDISTSTV (92 aa)) enclose the GED domain. A disordered region spans residues 741–870 (TSTVSTPVPP…IRPAEPSLLD (130 aa)). T755 carries the phosphothreonine modification. Polar residues predominate over residues 756 to 767 (WLQSASSHSPTP). S764 bears the Phosphoserine; by CDK1 mark. A compositionally biased stretch (low complexity) spans 796–806 (VPVGAAASFSA). Positions 826-855 (PAPPQIPSRPVRIPPGIPPGVPSRRPPAAP) are enriched in pro residues. S848 carries the post-translational modification Phosphoserine; by GSK3-alpha.

Belongs to the TRAFAC class dynamin-like GTPase superfamily. Dynamin/Fzo/YdjA family. As to quaternary structure, oligomerizes into a helical polymer that self-assembles around the vesicle membrane, when associated to the menbrane through lipid binding. Interacts with SHANK1 and SHANK2. Interacts with SNX9. Interacts (via C-terminal proline-rich domain (PRD)) with SNX18 (via SH3 domain); this interaction regulates ATG9A and ATG16L1 trafficking from recycling endosomes to sites of autophagosome formation. Interacts with SNX33 (via SH3 domain). Interacts with MYO1E (via SH3 domain). Interacts with PSTPIP1 (via SH3 domain). Interacts with CTNND2. Interacts (via C-terminal proline-rich domain (PRD)) with BIN1 (via SH3 domain); this interaction allows the recruitment of DNM2 to the membrane tubules and inhibits self-assembly-stimulated GTPase activity on the membrane. Interacts with GABARAP, GABARAPL1 and GABARAPL2. Interacts with MAP1LC3B (the lipidate and non-lipidated LC3 form); this interaction mediates recycling endosome scission leading to autophagosome release. Interacts with ITSN1. Interacts (via C-terminal proline-rich domain (PRD)) with SH3BP4 (via SH3 domain); this interaction controls the GTPase activity and is prevented by EGFR-induced tyrosine phosphorylation of either DNM2 or SH3BP4. May interact with PIK3C3. May be a component of a complex composed of RAB5A (in GDP-bound form), DYN2 and PIK3C3. Interacts with SDC4; this interaction is markedly enhanced at focal ahesion site upon induction of focal adhesions and stress-fiber formation. Interacts with ACTN1. Interacts with CTTN; this interaction stimulates the intrinsic GTPase activity of DNM2 and stabilizes the association of DNM2 and actin filaments; in addition this interaction is stimulated by ligand binding to the receptor, leading to the recruitment of the DNM2-CTTN complex to the sequestered receptor-ligand complex to its internalization. Interacts with NOSTRIN (via SH3 domain); this interaction allows the recruitment of NOS3 to dynamin-positive structures. Interacts with TUBG1; this interaction may participate in centrosome cohesion. Post-translationally, phosphorylation at Ser-848 by GSK3-alpha relieves the inhibition of BIN1 and promotes endocytosis. Phosphorylation at Ser-764 by CDK1 is greatly increased upon mitotic entry. It regulates cytokinesis downstream of calcineurin, and does not affect clathrin-mediated endocytosis. Dephosphorylated by calcineurin/PP2 during cytokinesis in a Ca(2+)- and calmodulin-dependent manner. Phosphorylated on tyrosine residues by EGFR and after activation of SRC. In terms of tissue distribution, widely expressed. Expressed in skeletal muscle and the peripheral nerve.

It localises to the cytoplasm. The protein localises to the cytoskeleton. The protein resides in the cytoplasmic vesicle. Its subcellular location is the clathrin-coated vesicle. It is found in the cell projection. It localises to the uropodium. The protein localises to the endosome. The protein resides in the microtubule organizing center. Its subcellular location is the centrosome. It is found in the centriole. It localises to the recycling endosome. The protein localises to the phagocytic cup. The protein resides in the phagosome membrane. Its subcellular location is the podosome. It is found in the cell junction. It localises to the postsynaptic density. The protein localises to the synapse. The protein resides in the synaptosome. Its subcellular location is the midbody. It is found in the membrane. It localises to the clathrin-coated pit. The enzyme catalyses GTP + H2O = GDP + phosphate + H(+). Its function is as follows. Catalyzes the hydrolysis of GTP and utilizes this energy to mediate vesicle scission at plasma membrane during endocytosis and filament remodeling at many actin structures during organization of the actin cytoskeleton. Plays an important role in vesicular trafficking processes, namely clathrin-mediated endocytosis (CME), exocytic and clathrin-coated vesicle from the trans-Golgi network, and PDGF stimulated macropinocytosis. During vesicular trafficking process, associates to the membrane, through lipid binding, and self-assembles into ring-like structure through oligomerization to form a helical polymer around the vesicle membrane and leading to vesicle scission. Plays a role in organization of the actin cytoskeleton by mediating arrangement of stress fibers and actin bundles in podocytes. During organization of the actin cytoskeleton, self-assembles into ring-like structure that directly bundles actin filaments to form typical membrane tubules decorated with dynamin spiral polymers. Self-assembly increases GTPase activity and the GTP hydrolysis causes the rapid depolymerization of dynamin spiral polymers, and results in dispersion of actin bundles. Remodels, through its interaction with CTTN, bundled actin filaments in a GTPase-dependent manner and plays a role in orchestrating the global actomyosin cytoskeleton. The interaction with CTTN stabilizes the interaction of DNM2 and actin filaments and stimulates the intrinsic GTPase activity that results in actin filament-barbed ends and increases the sensitivity of filaments in bundles to the actin depolymerizing factor, CFL1. Plays a role in the autophagy process, by participating in the formation of ATG9A vesicles destined for the autophagosomes through its interaction with SNX18, by mediating recycling endosome scission leading to autophagosome release through MAP1LC3B interaction. Also regulates maturation of apoptotic cell corpse-containing phagosomes by recruiting PIK3C3 to the phagosome membrane. Also plays a role in cytokinesis. May participate in centrosome cohesion through its interaction with TUBG1. Plays a role in the regulation of neuron morphology, axon growth and formation of neuronal growth cones. Involved in membrane tubulation. This chain is Dynamin-2, found in Homo sapiens (Human).